A 652-amino-acid chain; its full sequence is Type III restriction-modification enzyme StyLTI Mod subunit (652 aa).

Residues 135-138 are binding of S-adenosyl methionine; it reads DPPY.

This sequence belongs to the N(4)/N(6)-methyltransferase family. In terms of assembly, homodimer, also forms a functional restriction-competent complex with Res.

The enzyme catalyses a 2'-deoxyadenosine in DNA + S-adenosyl-L-methionine = an N(6)-methyl-2'-deoxyadenosine in DNA + S-adenosyl-L-homocysteine + H(+). Functionally, a beta subtype methylase that binds the system-specific DNA recognition site 5'-CAGAG-3' and methylates A-4 (of only 1 strand as the other does not have an A residue). DNA restriction requires both the Res and Mod subunits. This chain is Type III restriction-modification enzyme StyLTI Mod subunit, found in Salmonella typhimurium (strain LT2 / SGSC1412 / ATCC 700720).